Reading from the N-terminus, the 373-residue chain is Mating-type protein A-2 (373 aa).

The segment at 1–22 (MNLLNMQPKRSEQPAMFEENRA) is disordered.

This sequence to P.anserina SMR1.

Its function is as follows. Required, together with mating-type protein A-3, for efficient ascospore formation. This chain is Mating-type protein A-2 (matA-2), found in Neurospora crassa (strain ATCC 24698 / 74-OR23-1A / CBS 708.71 / DSM 1257 / FGSC 987).